Consider the following 72-residue polypeptide: Putative sodium channel toxin Ts18 (72 aa).

The signal sequence occupies residues 1-21 (MNFRFPFLLMITISLIGAVLT). 3 disulfide bridges follow: Cys38/Cys61, Cys47/Cys66, and Cys51/Cys68.

It belongs to the long (3 C-C) scorpion toxin superfamily. In terms of tissue distribution, expressed by the venom gland.

The protein localises to the secreted. Functionally, binds to sodium channels (Nav) and affects the channel activation process. The protein is Putative sodium channel toxin Ts18 of Tityus serrulatus (Brazilian scorpion).